We begin with the raw amino-acid sequence, 377 residues long: Leukocyte elastase inhibitor (377 aa).

Residue methionine 1 is modified to N-acetylmethionine.

The protein belongs to the serpin family. Ov-serpin subfamily.

The protein resides in the cytoplasm. Its function is as follows. Regulates the activity of the neutrophil proteases. This is Leukocyte elastase inhibitor (serpinb1) from Xenopus tropicalis (Western clawed frog).